We begin with the raw amino-acid sequence, 221 residues long: UPF0758 protein PC1_4100 (221 aa).

The MPN domain occupies 99–221 (AMLNPQATGQ…YVSFAERGWI (123 aa)). Residues histidine 170, histidine 172, and aspartate 183 each coordinate Zn(2+). The JAMM motif motif lies at 170–183 (HNHPSGKAEPSQAD).

It belongs to the UPF0758 family. YicR subfamily.

In Pectobacterium carotovorum subsp. carotovorum (strain PC1), this protein is UPF0758 protein PC1_4100.